We begin with the raw amino-acid sequence, 286 residues long: Bifunctional protein FolD (286 aa).

NADP(+)-binding positions include 166–168 and isoleucine 232; that span reads GAS.

It belongs to the tetrahydrofolate dehydrogenase/cyclohydrolase family. In terms of assembly, homodimer.

It catalyses the reaction (6R)-5,10-methylene-5,6,7,8-tetrahydrofolate + NADP(+) = (6R)-5,10-methenyltetrahydrofolate + NADPH. It carries out the reaction (6R)-5,10-methenyltetrahydrofolate + H2O = (6R)-10-formyltetrahydrofolate + H(+). It participates in one-carbon metabolism; tetrahydrofolate interconversion. Catalyzes the oxidation of 5,10-methylenetetrahydrofolate to 5,10-methenyltetrahydrofolate and then the hydrolysis of 5,10-methenyltetrahydrofolate to 10-formyltetrahydrofolate. This chain is Bifunctional protein FolD, found in Shewanella piezotolerans (strain WP3 / JCM 13877).